The following is a 261-amino-acid chain: Hydroxylase cctR (261 aa).

A helical membrane pass occupies residues 38–58 (VFVSLLILSNTISFGLLGWIG). N-linked (GlcNAc...) asparagine glycosylation occurs at Asn-95. 2 short sequence motifs (HXXHC) span residues 146–150 (HEIHC) and 176–180 (HIAHC).

Belongs to the ustYa family.

It localises to the membrane. It participates in mycotoxin biosynthesis. Functionally, hydroxylase; part of the gene cluster that mediates the biosynthesis of the mycotoxin cyclochlorotine, a hepatotoxic and carcinogenic cyclic chlorinated pentapeptide. Within the pathway, cctR performs the last step by hydroxylating cyclochlorotine to yield hydroxycyclochlorotine. The NRPS cctN initially catalyzes the condensation of L-serine (Ser), Pro, L-2-aminobutyrate (2Abu), Ser, and beta-Phe in this order to produce isocyclotine. After the dichlorination of Pro2 catalyzed by cctP2 to produce isocyclochlorotine, the cctO-mediated transacylation of isocyclochlorotine can furnish cyclochlorotine. The subsequent hydroxylation of cyclochlorotine by cctR yields hydroxycyclochlorotine as the final product. CctP1 probably acts as a phenylalanine aminomutase and provides the uncommon building block beta-Phe. Furthermore, 2Abu can be synthesized from threonine by one of the threonine dehydratases and transaminases localized outside of the cluster. The functions of the remaining proteins encoded by the cluster, cctM and cctT, have not been identified yet. The protein is Hydroxylase cctR of Talaromyces islandicus (Penicillium islandicum).